Here is a 1251-residue protein sequence, read N- to C-terminus: Phospholipid-transporting ATPase IC (1251 aa).

The interval 1 to 54 is disordered; the sequence is MSTERDSETTFDEDSQPNDEVVPYSDDETEDELDDQGSAVEPEQNRVNREAEEN. Residues 1 to 108 are Cytoplasmic-facing; it reads MSTERDSETT…TYKYNAFTFI (108 aa). Acidic residues predominate over residues 25-35; that stretch reads SDDETEDELDD. Residues 43–54 are compositionally biased toward basic and acidic residues; the sequence is EQNRVNREAEEN. A helical transmembrane segment spans residues 109–130; that stretch reads PMNLFEQFKRAANLYFLALLIL. At 131-136 the chain is on the exoplasmic loop side; the sequence is QAVPQI. Residues 137-156 traverse the membrane as a helical segment; the sequence is STLAWYTTLVPLLVVLGVTA. Residues 157–340 are Cytoplasmic-facing; sequence IKDLVDDVAR…TKIDYLMNYM (184 aa). The helical transmembrane segment at 341–362 threads the bilayer; it reads VYTIFVVLILLSAGLAIGHAYW. The Exoplasmic loop segment spans residues 363–389; the sequence is EAQVGNSSWYLYDGEDDTPSYRGFLIF. A helical transmembrane segment spans residues 390 to 411; sequence WGYIIVLNTMVPISLYVSVEVI. Residues 412 to 949 are Cytoplasmic-facing; the sequence is RLGQSHFINW…GRWSYIRMCK (538 aa). Aspartate 454 functions as the 4-aspartylphosphate intermediate in the catalytic mechanism. ATP contacts are provided by aspartate 454, lysine 455, threonine 456, glutamate 555, phenylalanine 596, lysine 619, arginine 652, threonine 732, glycine 733, aspartate 734, arginine 867, and lysine 873. Aspartate 454 contributes to the Mg(2+) binding site. Threonine 456 contributes to the Mg(2+) binding site. Aspartate 893 serves as a coordination point for Mg(2+). 2 residues coordinate ATP: asparagine 896 and aspartate 897. Aspartate 897 serves as a coordination point for Mg(2+). Residues 950-970 form a helical membrane-spanning segment; the sequence is FLRYFFYKNFAFTLVHFWYSF. Over 971-982 the chain is Exoplasmic loop; that stretch reads FNGYSAQTAYED. Residues 983–1002 traverse the membrane as a helical segment; it reads WFITLYNVLYTSLPVLLMGL. Residues 1003-1032 lie on the Cytoplasmic side of the membrane; sequence LDQDVSDKLSLRFPGLYIVGQRDLLFNYKR. A helical membrane pass occupies residues 1033–1054; it reads FFVSLLHGVLTSMILFFIPLGA. The Exoplasmic loop portion of the chain corresponds to 1055–1068; it reads YLQTVGQDGEAPSD. A helical membrane pass occupies residues 1069–1091; that stretch reads YQSFAVTIASALVITVNFQIGLD. At 1092–1097 the chain is on the cytoplasmic side; sequence TSYWTF. The chain crosses the membrane as a helical span at residues 1098–1118; the sequence is VNAFSIFGSIALYFGIMFDFH. Over 1119-1138 the chain is Exoplasmic loop; the sequence is SAGIHVLFPSAFQFTGTASN. The chain crosses the membrane as a helical span at residues 1139 to 1163; it reads ALRQPYIWLTIILAVAVCLLPVVAI. At 1164–1251 the chain is on the cytoplasmic side; it reads RFLSMTIWPS…TAEYRRTGDS (88 aa). A Phosphoserine modification is found at serine 1223.

Belongs to the cation transport ATPase (P-type) (TC 3.A.3) family. Type IV subfamily. In terms of assembly, component of a P4-ATPase flippase complex which consists of a catalytic alpha subunit ATP8B1 and an accessory beta subunit TMEM30A. The flippase ATP8B1:TMEM30A complex can form an intermediate phosphoenzyme in vitro. Also interacts with beta subunit TMEM30B. Mg(2+) serves as cofactor. Found in most tissues except brain and skeletal muscle. Most abundant in pancreas and small intestine.

It localises to the cell membrane. Its subcellular location is the apical cell membrane. The protein resides in the cell projection. The protein localises to the stereocilium. It is found in the endoplasmic reticulum. It localises to the golgi apparatus. It carries out the reaction ATP + H2O + phospholipidSide 1 = ADP + phosphate + phospholipidSide 2.. The enzyme catalyses a 1,2-diacyl-sn-glycero-3-phosphocholine(out) + ATP + H2O = a 1,2-diacyl-sn-glycero-3-phosphocholine(in) + ADP + phosphate + H(+). It catalyses the reaction a 1,2-diacyl-sn-glycero-3-phospho-L-serine(out) + ATP + H2O = a 1,2-diacyl-sn-glycero-3-phospho-L-serine(in) + ADP + phosphate + H(+). Functionally, catalytic component of a P4-ATPase flippase complex which catalyzes the hydrolysis of ATP coupled to the transport of phospholipids, in particular phosphatidylcholines (PC), from the outer to the inner leaflet of the plasma membrane. May participate in the establishment of the canalicular membrane integrity by ensuring asymmetric distribution of phospholipids in the canicular membrane. Thus may have a role in the regulation of bile acids transport into the canaliculus, uptake of bile acids from intestinal contents into intestinal mucosa or both and protect hepatocytes from bile salts. Involved in the microvillus formation in polarized epithelial cells; the function seems to be independent from its flippase activity. Participates in correct apical membrane localization of CDC42, CFTR and SLC10A2. Enables CDC42 clustering at the apical membrane during enterocyte polarization through the interaction between CDC42 polybasic region and negatively charged membrane lipids provided by ATP8B1. Together with TMEM30A is involved in uptake of the synthetic drug alkylphospholipid perifosine. Required for the preservation of cochlear hair cells in the inner ear. May act as cardiolipin transporter during inflammatory injury. The polypeptide is Phospholipid-transporting ATPase IC (Homo sapiens (Human)).